The sequence spans 88 residues: Small ribosomal subunit protein uS15 (88 aa).

This sequence belongs to the universal ribosomal protein uS15 family. As to quaternary structure, part of the 30S ribosomal subunit. Forms a bridge to the 50S subunit in the 70S ribosome, contacting the 23S rRNA.

Functionally, one of the primary rRNA binding proteins, it binds directly to 16S rRNA where it helps nucleate assembly of the platform of the 30S subunit by binding and bridging several RNA helices of the 16S rRNA. Its function is as follows. Forms an intersubunit bridge (bridge B4) with the 23S rRNA of the 50S subunit in the ribosome. In Mesoplasma florum (strain ATCC 33453 / NBRC 100688 / NCTC 11704 / L1) (Acholeplasma florum), this protein is Small ribosomal subunit protein uS15.